A 224-amino-acid chain; its full sequence is UPF0758 protein lmo1549 (224 aa).

One can recognise an MPN domain in the interval 102–224; sequence VVRCPEDAVK…YISLKEKGYF (123 aa). Residues H173, H175, and D186 each coordinate Zn(2+). A JAMM motif motif is present at residues 173–186; sequence HNHPSGDPTPSSED.

It belongs to the UPF0758 family.

The sequence is that of UPF0758 protein lmo1549 from Listeria monocytogenes serovar 1/2a (strain ATCC BAA-679 / EGD-e).